We begin with the raw amino-acid sequence, 311 residues long: Catabolite control protein B (311 aa).

The 56-residue stretch at 1–56 folds into the HTH lacI-type domain; it reads MANIKEIARLANVSVSTVSRVLNHHPYVSEEKRKLVHQVMKELDYTPNRTAIDLIR. The segment at residues 4–23 is a DNA-binding region (H-T-H motif); it reads IKEIARLANVSVSTVSRVLN.

In terms of assembly, seems to be complexed to phosphorylated HPr.

Functionally, transcriptional regulator involved in catabolite repression of several operons. The protein is Catabolite control protein B (ccpB) of Bacillus subtilis (strain 168).